The sequence spans 244 residues: Protein crossbronx (244 aa).

The UBC core domain occupies 20–176 (QQEYKILAEY…VQKNIKESKD (157 aa)).

This sequence belongs to the ubiquitin-conjugating enzyme family. FTS subfamily.

This Drosophila yakuba (Fruit fly) protein is Protein crossbronx (cbx).